A 213-amino-acid polypeptide reads, in one-letter code: N-(5'-phosphoribosyl)anthranilate isomerase (213 aa).

The protein belongs to the TrpF family.

The enzyme catalyses N-(5-phospho-beta-D-ribosyl)anthranilate = 1-(2-carboxyphenylamino)-1-deoxy-D-ribulose 5-phosphate. The protein operates within amino-acid biosynthesis; L-tryptophan biosynthesis; L-tryptophan from chorismate: step 3/5. The polypeptide is N-(5'-phosphoribosyl)anthranilate isomerase (Methylibium petroleiphilum (strain ATCC BAA-1232 / LMG 22953 / PM1)).